A 233-amino-acid chain; its full sequence is MVKFIALITAAGSGSRMGEDIPKQYRPLAGKPMIYHALRTLCGIARISTVCIVLAPEDTEWIRHNWREFAGKIQIFNCGGATRAESVTNGLKALRAANHVQDQDWILVHDAARPGLSTTLVERLLDQLADDEVGGLLAVPLADTLKRADDAGRVICTEPRERLWQAQTPQMFRMKLLLEALEKAPAGITDDASAVEALGLSPKLVVGNAYNFKVTYPQDLKLAELILRERAIT.

The protein belongs to the IspD/TarI cytidylyltransferase family. IspD subfamily.

It catalyses the reaction 2-C-methyl-D-erythritol 4-phosphate + CTP + H(+) = 4-CDP-2-C-methyl-D-erythritol + diphosphate. It participates in isoprenoid biosynthesis; isopentenyl diphosphate biosynthesis via DXP pathway; isopentenyl diphosphate from 1-deoxy-D-xylulose 5-phosphate: step 2/6. Catalyzes the formation of 4-diphosphocytidyl-2-C-methyl-D-erythritol from CTP and 2-C-methyl-D-erythritol 4-phosphate (MEP). In Nitrosomonas eutropha (strain DSM 101675 / C91 / Nm57), this protein is 2-C-methyl-D-erythritol 4-phosphate cytidylyltransferase.